We begin with the raw amino-acid sequence, 248 residues long: Small ribosomal subunit protein uS3 (248 aa).

Residues 38 to 106 (IREFLSKGLD…QVALNILEVK (69 aa)) enclose the KH type-2 domain. The segment covering 214-230 (SEINAPAERRGRGDRNA) has biased composition (basic and acidic residues). The segment at 214-248 (SEINAPAERRGRGDRNARPRRGGQRRQRAEQKQEG) is disordered.

The protein belongs to the universal ribosomal protein uS3 family. As to quaternary structure, part of the 30S ribosomal subunit. Forms a tight complex with proteins S10 and S14.

Functionally, binds the lower part of the 30S subunit head. Binds mRNA in the 70S ribosome, positioning it for translation. The sequence is that of Small ribosomal subunit protein uS3 from Corynebacterium glutamicum (strain R).